Reading from the N-terminus, the 411-residue chain is MLACIACSTKDGGEGGHRSATATPNSGKSLTSQLKDMVLKFSGSGRHQYKSGGSPSLRTSRFHRSSRLAAYPGIIDESGFTSDGAGEAYTYMRTTTASAGARAAPSTWDLPPKVNHRSFQPRVIRSPSASGVPSIGEEDYDDDDDDDDEETVLLEEDRVPREWTAQVEPGVQITFVSIPGGAGNDLKRIRFSREMFNKWEAQRWWGENYDRVVELYNVQTFSRQQGFSTPTSSVDEAMQRDSFYSRVGSTRESPAMMMPPPPPLPSSGAGREHPISRTASSKAQLSSSSSVAAARPPFYPSTAVPDPSDHVWAHHFNLLNSAAAGPAAPYDPSRGTTSSRDEASVSISNASDLEATEWVEQDEPGVSITIREFGDGTRELRRVRFSRERFGEERAKVWWEQNRDRIHAQYL.

2 disordered regions span residues Lys-10–Thr-31 and Ala-103–Glu-149. Residues Ala-20–Thr-31 are compositionally biased toward polar residues. Over residues Gly-136–Glu-149 the composition is skewed to acidic residues. Residues Arg-161 to Asn-217 form the BRX 1 domain. 2 disordered regions span residues Ser-245–Ala-294 and Ala-324–Ser-346. Positions Ser-276 to Ala-294 are enriched in low complexity. The BRX 2 domain maps to Thr-356 to Leu-411.

It belongs to the BRX family.

It is found in the nucleus. The polypeptide is Protein Brevis radix-like 2 (BRXL2) (Oryza sativa subsp. japonica (Rice)).